Consider the following 474-residue polypeptide: Glycogen synthase (474 aa).

Lys15 is a binding site for ADP-alpha-D-glucose.

The protein belongs to the glycosyltransferase 1 family. Bacterial/plant glycogen synthase subfamily.

The enzyme catalyses [(1-&gt;4)-alpha-D-glucosyl](n) + ADP-alpha-D-glucose = [(1-&gt;4)-alpha-D-glucosyl](n+1) + ADP + H(+). It participates in glycan biosynthesis; glycogen biosynthesis. Synthesizes alpha-1,4-glucan chains using ADP-glucose. In Chlamydia trachomatis serovar L2b (strain UCH-1/proctitis), this protein is Glycogen synthase.